A 458-amino-acid polypeptide reads, in one-letter code: UDP-N-acetylmuramate--L-alanine ligase (458 aa).

Residue 118–124 coordinates ATP; sequence GTHGKTT.

This sequence belongs to the MurCDEF family.

It is found in the cytoplasm. The enzyme catalyses UDP-N-acetyl-alpha-D-muramate + L-alanine + ATP = UDP-N-acetyl-alpha-D-muramoyl-L-alanine + ADP + phosphate + H(+). It functions in the pathway cell wall biogenesis; peptidoglycan biosynthesis. Functionally, cell wall formation. This Clostridium acetobutylicum (strain ATCC 824 / DSM 792 / JCM 1419 / IAM 19013 / LMG 5710 / NBRC 13948 / NRRL B-527 / VKM B-1787 / 2291 / W) protein is UDP-N-acetylmuramate--L-alanine ligase.